We begin with the raw amino-acid sequence, 481 residues long: MVGPRTRGYAIHKLGFCSVVMLGINSIIGAGIFLTPGEVIGLAGPFAPMAYVLAGIFAGVVAIVFATAARYVRTNGASYAYTTAAFGRRIGIYVGVTHAITASIAWGVLASFFVSTLLRVAFPDKAWADAEQLFSVKTLTFLGFIGVLLAINLFGNRAIKWANGTSTVGKAFALSAFIVGGLWIITTQHVNNYATAWSAYSATPYSLLGVAEIGKGTFSSMALATIVALYAFTGFESIANAAEEMDAPDRNLPRAIPIAIFSVGAIYLLTLTVAMLLGSNKIAASGDTVKLAAAIGNATFRTIIVVGALISMFGINVAASFGAPRLWTALADSGVLPTRLSRKNQYDVPMVSFAITASLALAFPLALRFDNLHLTGLAVIARFVQFIIVPIALIALARSQAVEHAAVRRNAFTDKVLPLVAIVVSVGLAVSYDYRCIFLVRGGPNYFSIALIVITFIVVPAMAYLHYYRIIRRVGDRPSTR.

The next 11 membrane-spanning stretches (helical) occupy residues 14 to 34, 46 to 66, 90 to 110, 134 to 154, 167 to 187, 218 to 238, 258 to 278, 303 to 323, 377 to 397, 411 to 431, and 446 to 466; these read LGFC…GIFL, FAPM…IVFA, IGIY…GVLA, FSVK…INLF, TVGK…IITT, FSSM…FESI, IAIF…MLLG, IIVV…SFGA, LAVI…IALA, AFTD…LAVS, and YFSI…AYLH.

This sequence belongs to the amino acid-polyamine-organocation (APC) superfamily.

It localises to the cell membrane. Its function is as follows. Probable amino-acid or metabolite transport protein. This is an uncharacterized protein from Mycobacterium bovis (strain ATCC BAA-935 / AF2122/97).